A 303-amino-acid chain; its full sequence is Nod factor export ATP-binding protein I (303 aa).

The ABC transporter domain occupies Leu-5 to Tyr-235. Gly-37–Thr-44 contributes to the ATP binding site.

It belongs to the ABC transporter superfamily. Lipooligosaccharide exporter (TC 3.A.1.102) family. As to quaternary structure, the complex is composed of two ATP-binding proteins (NodI) and two transmembrane proteins (NodJ).

It is found in the cell inner membrane. Part of the ABC transporter complex NodIJ involved in the export of the nodulation factors (Nod factors), the bacterial signal molecules that induce symbiosis and subsequent nodulation induction. Nod factors are LCO (lipo-chitin oligosaccharide), a modified beta-1,4-linked N-acetylglucosamine oligosaccharide. This subunit is responsible for energy coupling to the transport system. The protein is Nod factor export ATP-binding protein I of Cupriavidus metallidurans (strain ATCC 43123 / DSM 2839 / NBRC 102507 / CH34) (Ralstonia metallidurans).